The primary structure comprises 224 residues: DNA repair and recombination protein RadB (224 aa).

Belongs to the eukaryotic RecA-like protein family. RadB subfamily.

Its function is as follows. Involved in DNA repair and in homologous recombination. May regulate the cleavage reactions of the branch-structured DNA. Has a very weak ATPase activity that is not stimulated by DNA. Binds DNA but does not promote DNA strands exchange. The polypeptide is DNA repair and recombination protein RadB (Thermococcus onnurineus (strain NA1)).